Here is a 237-residue protein sequence, read N- to C-terminus: Lectin alpha chain (237 aa).

Mn(2+) contacts are provided by Glu8 and Asp10. Ca(2+)-binding residues include Asp10, Tyr12, Asn14, and Asp19. Tyr12 lines the a carbohydrate pocket. Asp19 and His24 together coordinate Mn(2+). 99–100 contributes to the a carbohydrate binding site; that stretch reads LY. Asp208 contacts Ca(2+). Residue Arg228 participates in a carbohydrate binding.

It belongs to the leguminous lectin family. Homotetramer. In terms of processing, the beta and gamma chains are produced by partial proteolytic processing of the lectin alpha chain by an asparaginyl endopeptidase.

Its subcellular location is the vacuole. The protein localises to the aleurone grain. In terms of biological role, D-mannose/D-glucose-binding lectin with hemagglutinating activity towards rabbit and human erythrocytes. In rats, elicits an acute inflammatory response by inducing neutrophil migration and induces dose-dependent paw edema. This chain is Lectin alpha chain, found in Macropsychanthus wilsonii (Wilson's clusterpea).